A 702-amino-acid polypeptide reads, in one-letter code: Methionine--tRNA ligase (702 aa).

The short motif at 23–33 (PYANGPLHLGH) is the 'HIGH' region element. Residues Cys154, Cys157, Cys167, and Cys170 each coordinate Zn(2+). The short motif at 341–345 (KMSKS) is the 'KMSKS' region element. Lys344 serves as a coordination point for ATP. Positions 562–593 (LAPPPASAKQQNASMSNTAPPPTAEEPETTAP) are disordered. Over residues 569 to 578 (AKQQNASMSN) the composition is skewed to polar residues. One can recognise a tRNA-binding domain in the interval 599–702 (DFAKLDLRIG…SSAQPGMPVR (104 aa)).

This sequence belongs to the class-I aminoacyl-tRNA synthetase family. MetG type 1 subfamily. In terms of assembly, homodimer. Zn(2+) is required as a cofactor.

Its subcellular location is the cytoplasm. It catalyses the reaction tRNA(Met) + L-methionine + ATP = L-methionyl-tRNA(Met) + AMP + diphosphate. Its function is as follows. Is required not only for elongation of protein synthesis but also for the initiation of all mRNA translation through initiator tRNA(fMet) aminoacylation. The polypeptide is Methionine--tRNA ligase (Xylella fastidiosa (strain M23)).